The chain runs to 460 residues: Glycine--tRNA ligase (460 aa).

Residues R99 and E162 each contribute to the substrate site. Residues 194–196, 204–209, 281–282, and 325–328 contribute to the ATP site; these read RNE, FRTREF, EL, and GVGR. Residue 209–213 participates in substrate binding; that stretch reads FEQME. Residue 321–325 participates in substrate binding; sequence EPAAG.

It belongs to the class-II aminoacyl-tRNA synthetase family. Homodimer.

Its subcellular location is the cytoplasm. The catalysed reaction is tRNA(Gly) + glycine + ATP = glycyl-tRNA(Gly) + AMP + diphosphate. Functionally, catalyzes the attachment of glycine to tRNA(Gly). The protein is Glycine--tRNA ligase of Streptomyces coelicolor (strain ATCC BAA-471 / A3(2) / M145).